Consider the following 146-residue polypeptide: 1,4-dihydroxy-2-naphthoyl-CoA hydrolase (146 aa).

Asp-19 is an active-site residue.

It belongs to the 4-hydroxybenzoyl-CoA thioesterase family. DHNA-CoA hydrolase subfamily.

The enzyme catalyses 1,4-dihydroxy-2-naphthoyl-CoA + H2O = 1,4-dihydroxy-2-naphthoate + CoA + H(+). Its pathway is cofactor biosynthesis; phylloquinone biosynthesis. The protein operates within quinol/quinone metabolism; 1,4-dihydroxy-2-naphthoate biosynthesis; 1,4-dihydroxy-2-naphthoate from chorismate: step 7/7. Its function is as follows. Catalyzes the hydrolysis of 1,4-dihydroxy-2-naphthoyl-CoA (DHNA-CoA) to 1,4-dihydroxy-2-naphthoate (DHNA), a reaction involved in phylloquinone (vitamin K1) biosynthesis. The protein is 1,4-dihydroxy-2-naphthoyl-CoA hydrolase of Thermosynechococcus vestitus (strain NIES-2133 / IAM M-273 / BP-1).